A 163-amino-acid polypeptide reads, in one-letter code: MFRQLRLTMDISGWIFMPWRRSLSNKQSPPPPLASTINDVIVDYDDPDYLPLPEYPVRPNEPLDIRKQRLLYQSRKRGMLENDLLLSTFAAKYLDNFNAEQTAQYDQLINGVSNDWDIYYWATDVKPTPKEYDTEIMRLLKDHVKNAERISRIRQPDLYSSES.

A mitochondrion-targeting transit peptide spans 1–23 (MFRQLRLTMDISGWIFMPWRRSL).

Belongs to the SDHAF2 family. In terms of assembly, interacts with the flavoprotein subunit within the SDH catalytic dimer.

The protein resides in the mitochondrion matrix. Its function is as follows. Plays an essential role in the assembly of succinate dehydrogenase (SDH), an enzyme complex (also referred to as respiratory complex II) that is a component of both the tricarboxylic acid (TCA) cycle and the mitochondrial electron transport chain, and which couples the oxidation of succinate to fumarate with the reduction of ubiquinone (coenzyme Q) to ubiquinol. Required for flavinylation (covalent attachment of FAD) of the flavoprotein subunit of the SDH catalytic dimer. This Drosophila ananassae (Fruit fly) protein is Succinate dehydrogenase assembly factor 2-B, mitochondrial.